The following is a 52-amino-acid chain: Sperm protamine P1 (52 aa).

The segment at 1–27 (MARYSCCRSHSRSRSRRRRQRCRRRRR) is disordered. Positions 9–27 (SHSRSRSRRRRQRCRRRRR) are enriched in basic residues.

It belongs to the protamine P1 family. Testis.

The protein localises to the nucleus. Its subcellular location is the chromosome. In terms of biological role, protamines substitute for histones in the chromatin of sperm during the haploid phase of spermatogenesis. They compact sperm DNA into a highly condensed, stable and inactive complex. The chain is Sperm protamine P1 (PRM1) from Rhinolophus ferrumequinum (Greater horseshoe bat).